A 776-amino-acid polypeptide reads, in one-letter code: MTASTQNGSPTPPPAAPTATNQESKNMTANPADASESQSPANEKGGGTAENGQKHTSTAANAKDPLRPRRKKAKRACFACQRAHLTCGDERPCQRCIKRGLQDACHDGVRKKAKYLHDAPNEALMPGIRRNFYNQANATRTNASQQQNGPNSNSNKDSRQNVAANFYSPQSASNFDVYTQAKSQQGQGHIPPTVMQDTSINPSAFQAPSPTSTPNFDLSSNPPNRNLSSAMTQTPSSASNQTQDPFGAAFFDPSHPALFNFDIASMNFGNRYGALEFGMLGHMATGAGDTPPSDSATQRGSIGRSSGTFTAQNFGDSTNTQPPFLFGDPVLNDWNPSGQSQTNPRNNNIYNQNTVAGQMGEQHPNAFAIESAPMNFASPGSTESPQMTTMNQFDEANAKFSSRTALMHQTNPHQPPPISTPGLKHQGFQVGVKRRYRSPSSIYESVKEPYSYTSGFHNLTAFIQRRFSPQKTLQIAKALASIRPSFIATTKTLNQDDLIFMEKCFQRTLWEYEDFINACGTPTIVCRRTGEIAAVGKEFSILTGWKKEVLLGKEPNLNVNTGGSSPRGSGTFTPRNGNGVDPHSGMSASGGGGGRTQPVFLAELLDDDSVIEFYEDFAKLAFGDSRGSVMTTCKLLKYKTKEDSAALFQGREAQQGGPDGKGGGGGGGDVATTAATTSTSTSNGANSSGHANANRNNTNPNNSSPPSSSSAAAAGPLHGAQLSPKQTWGKRGIAGEAGMNQLGFRDGKVECSYCWTVKRDVFDIPMLIVMNFLPCI.

The interval 1-70 (MTASTQNGSP…NAKDPLRPRR (70 aa)) is disordered. Polar residues-rich tracts occupy residues 21-41 (NQES…QSPA) and 50-60 (ENGQKHTSTAA). The segment at residues 77-105 (CFACQRAHLTCGDERPCQRCIKRGLQDAC) is a DNA-binding region (zn(2)-C6 fungal-type). Disordered stretches follow at residues 140–159 (RTNA…KDSR), 179–248 (TQAK…PFGA), 286–351 (GAGD…NIYN), 556–593 (NLNV…GGGG), and 651–726 (REAQ…SPKQ). A compositionally biased stretch (low complexity) spans 142 to 155 (NASQQQNGPNSNSN). Positions 195–217 (MQDTSINPSAFQAPSPTSTPNFD) are enriched in polar residues. Over residues 218–229 (LSSNPPNRNLSS) the composition is skewed to low complexity. Composition is skewed to polar residues over residues 230-244 (AMTQ…QTQD), 292-322 (PSDS…NTQP), 334-351 (WNPS…NIYN), and 557-576 (LNVN…TPRN). Gly residues predominate over residues 657-669 (GPDGKGGGGGGGD). Low complexity predominate over residues 670 to 714 (VATTAATTSTSTSNGANSSGHANANRNNTNPNNSSPPSSSSAAAA).

Belongs to the ERT1/acuK family.

The protein localises to the nucleus. Its function is as follows. Transcription factor which regulates nonfermentable carbon utilization. Activator of gluconeogenetic genes. In Ajellomyces capsulatus (strain NAm1 / WU24) (Darling's disease fungus), this protein is Transcription activator of gluconeogenesis HCAG_03671.